Reading from the N-terminus, the 153-residue chain is MKLRIIWLGKTRDPWIKQGVTEYSGRIERYLPLAIDELKDEKDATLEEGRRREGERLLKQLSPNAVLVALDERGQQLDSVKFAEFIGKHRDSGTTELVFAIGGSYGFSDEVRSRAGKVLALSAMTFTHQMVRPFLLEQIYRACTILNNEPYHH.

S-adenosyl-L-methionine is bound by residues L70, G102, and 121-126 (LSAMTF).

The protein belongs to the RNA methyltransferase RlmH family. Homodimer.

It localises to the cytoplasm. The enzyme catalyses pseudouridine(1915) in 23S rRNA + S-adenosyl-L-methionine = N(3)-methylpseudouridine(1915) in 23S rRNA + S-adenosyl-L-homocysteine + H(+). In terms of biological role, specifically methylates the pseudouridine at position 1915 (m3Psi1915) in 23S rRNA. This chain is Ribosomal RNA large subunit methyltransferase H, found in Trichlorobacter lovleyi (strain ATCC BAA-1151 / DSM 17278 / SZ) (Geobacter lovleyi).